Here is a 238-residue protein sequence, read N- to C-terminus: Pyridoxine 5'-phosphate synthase (238 aa).

N7 serves as a coordination point for 3-amino-2-oxopropyl phosphate. 9 to 10 provides a ligand contact to 1-deoxy-D-xylulose 5-phosphate; the sequence is DH. A 3-amino-2-oxopropyl phosphate-binding site is contributed by R18. H43 functions as the Proton acceptor in the catalytic mechanism. 2 residues coordinate 1-deoxy-D-xylulose 5-phosphate: R45 and H50. The Proton acceptor role is filled by E70. T100 contributes to the 1-deoxy-D-xylulose 5-phosphate binding site. H190 functions as the Proton donor in the catalytic mechanism. 3-amino-2-oxopropyl phosphate is bound by residues G191 and 212-213; that span reads GH.

The protein belongs to the PNP synthase family. In terms of assembly, homooctamer; tetramer of dimers.

It is found in the cytoplasm. The enzyme catalyses 3-amino-2-oxopropyl phosphate + 1-deoxy-D-xylulose 5-phosphate = pyridoxine 5'-phosphate + phosphate + 2 H2O + H(+). The protein operates within cofactor biosynthesis; pyridoxine 5'-phosphate biosynthesis; pyridoxine 5'-phosphate from D-erythrose 4-phosphate: step 5/5. In terms of biological role, catalyzes the complicated ring closure reaction between the two acyclic compounds 1-deoxy-D-xylulose-5-phosphate (DXP) and 3-amino-2-oxopropyl phosphate (1-amino-acetone-3-phosphate or AAP) to form pyridoxine 5'-phosphate (PNP) and inorganic phosphate. The sequence is that of Pyridoxine 5'-phosphate synthase from Prochlorococcus marinus subsp. pastoris (strain CCMP1986 / NIES-2087 / MED4).